The chain runs to 313 residues: Olfactory receptor 10G3 (313 aa).

The Extracellular segment spans residues 1–25 (MERINSTLLTAFILTGIPYPLRLRT). The N-linked (GlcNAc...) asparagine glycan is linked to N5. A helical membrane pass occupies residues 26–46 (LFFVFFFLIYILTQLGNLLIL). At 47-54 (ITVWADPR) the chain is on the cytoplasmic side. The helical transmembrane segment at 55-76 (LHARPMYIFLGVLSVIDMSISS) threads the bilayer. At 77 to 100 (IIVPRLMMNFTLGVKPIPFGGCVA) the chain is on the extracellular side. A glycan (N-linked (GlcNAc...) asparagine) is linked at N85. An intrachain disulfide couples C98 to C190. A helical transmembrane segment spans residues 101-121 (QLYFYHFLGSTQCFLYTLMAY). Residues 122–140 (DRYLAICQPLRYPVLMTAK) are Cytoplasmic-facing. A helical membrane pass occupies residues 141 to 161 (LSALLVAGAWMAGSIHGALQA). At 162-198 (ILTFRLPYCGPNQVDYFFCDIPAVLRLACADTTVNEL) the chain is on the extracellular side. A helical membrane pass occupies residues 199-218 (VTFVDIGVVVASCFSLILLS). Residues 219-238 (YIQIIQAILRIHTADGRRRA) are Cytoplasmic-facing. The helical transmembrane segment at 239-259 (FSTCGAHVTVVTVYYVPCAFI) threads the bilayer. Residues 260-270 (YLRPETNSPLD) lie on the Extracellular side of the membrane. The helical transmembrane segment at 271 to 291 (GAAALVPTAITPFLNPLIYTL) threads the bilayer. Over 292-313 (RNQEVKLALKRMLRSPRTPSEV) the chain is Cytoplasmic.

The protein belongs to the G-protein coupled receptor 1 family.

Its subcellular location is the cell membrane. Functionally, odorant receptor. The polypeptide is Olfactory receptor 10G3 (OR10G3) (Homo sapiens (Human)).